A 208-amino-acid chain; its full sequence is Putative 3-methyladenine DNA glycosylase (208 aa).

A disordered region spans residues 1–20 (MGRAHTVSRGEDHPPIARSE).

The protein belongs to the DNA glycosylase MPG family.

The polypeptide is Putative 3-methyladenine DNA glycosylase (Mesorhizobium japonicum (strain LMG 29417 / CECT 9101 / MAFF 303099) (Mesorhizobium loti (strain MAFF 303099))).